A 1141-amino-acid polypeptide reads, in one-letter code: DNA polymerase II large subunit (1141 aa).

The tract at residues 567 to 587 (AGTRVGGRMGRPGKSAPRKMK) is disordered.

It belongs to the archaeal DNA polymerase II family. Heterodimer of a large subunit and a small subunit.

It carries out the reaction DNA(n) + a 2'-deoxyribonucleoside 5'-triphosphate = DNA(n+1) + diphosphate. The catalysed reaction is Exonucleolytic cleavage in the 3'- to 5'-direction to yield nucleoside 5'-phosphates.. Its function is as follows. Possesses two activities: a DNA synthesis (polymerase) and an exonucleolytic activity that degrades single-stranded DNA in the 3'- to 5'-direction. Has a template-primer preference which is characteristic of a replicative DNA polymerase. This Methanocorpusculum labreanum (strain ATCC 43576 / DSM 4855 / Z) protein is DNA polymerase II large subunit.